The sequence spans 479 residues: Aspartyl/glutamyl-tRNA(Asn/Gln) amidotransferase subunit B (479 aa).

The protein belongs to the GatB/GatE family. GatB subfamily. Heterotrimer of A, B and C subunits.

It catalyses the reaction L-glutamyl-tRNA(Gln) + L-glutamine + ATP + H2O = L-glutaminyl-tRNA(Gln) + L-glutamate + ADP + phosphate + H(+). The enzyme catalyses L-aspartyl-tRNA(Asn) + L-glutamine + ATP + H2O = L-asparaginyl-tRNA(Asn) + L-glutamate + ADP + phosphate + 2 H(+). Functionally, allows the formation of correctly charged Asn-tRNA(Asn) or Gln-tRNA(Gln) through the transamidation of misacylated Asp-tRNA(Asn) or Glu-tRNA(Gln) in organisms which lack either or both of asparaginyl-tRNA or glutaminyl-tRNA synthetases. The reaction takes place in the presence of glutamine and ATP through an activated phospho-Asp-tRNA(Asn) or phospho-Glu-tRNA(Gln). The sequence is that of Aspartyl/glutamyl-tRNA(Asn/Gln) amidotransferase subunit B from Halorhodospira halophila (strain DSM 244 / SL1) (Ectothiorhodospira halophila (strain DSM 244 / SL1)).